Reading from the N-terminus, the 174-residue chain is N-terminal acetyltransferase B complex catalytic subunit NAA20 (174 aa).

The N-acetyltransferase domain occupies 2 to 151; sequence TTIRRFSCND…DGLDMRKALS (150 aa).

The protein belongs to the acetyltransferase family. ARD1 subfamily.

It carries out the reaction N-terminal L-methionyl-L-asparaginyl-[protein] + acetyl-CoA = N-terminal N(alpha)-acetyl-L-methionyl-L-asparaginyl-[protein] + CoA + H(+). The enzyme catalyses N-terminal L-methionyl-L-glutaminyl-[protein] + acetyl-CoA = N-terminal N(alpha)-acetyl-L-methionyl-L-glutaminyl-[protein] + CoA + H(+). The catalysed reaction is N-terminal L-methionyl-L-aspartyl-[protein] + acetyl-CoA = N-terminal N(alpha)-acetyl-L-methionyl-L-aspartyl-[protein] + CoA + H(+). It catalyses the reaction N-terminal L-methionyl-L-glutamyl-[protein] + acetyl-CoA = N-terminal N(alpha)-acetyl-L-methionyl-L-glutamyl-[protein] + CoA + H(+). Its function is as follows. Catalytic subunit of the NatB N-alpha-acetyltransferase complex. Involved in plant immunity through the regulation of SNC1 stability. The chain is N-terminal acetyltransferase B complex catalytic subunit NAA20 from Arabidopsis thaliana (Mouse-ear cress).